Here is a 192-residue protein sequence, read N- to C-terminus: dCTP deaminase, dUMP-forming (192 aa).

Residues 101 to 106, aspartate 119, 127 to 129, glutamine 148, tyrosine 162, and glutamine 174 each bind dCTP; these read KSSLGR and TLE. Glutamate 129 (proton donor/acceptor) is an active-site residue. A disordered region spans residues 162–192; the sequence is YGSGADGSRYQGQRGPTASRSHVKFHRTHVE. Residues 171–181 show a composition bias toward polar residues; sequence YQGQRGPTASR. The segment covering 182–192 has biased composition (basic residues); that stretch reads SHVKFHRTHVE.

This sequence belongs to the dCTP deaminase family. Homotrimer.

It catalyses the reaction dCTP + 2 H2O = dUMP + NH4(+) + diphosphate. The protein operates within pyrimidine metabolism; dUMP biosynthesis; dUMP from dCTP: step 1/1. Its function is as follows. Bifunctional enzyme that catalyzes both the deamination of dCTP to dUTP and the hydrolysis of dUTP to dUMP without releasing the toxic dUTP intermediate. The sequence is that of dCTP deaminase, dUMP-forming from Beutenbergia cavernae (strain ATCC BAA-8 / DSM 12333 / CCUG 43141 / JCM 11478 / NBRC 16432 / NCIMB 13614 / HKI 0122).